Reading from the N-terminus, the 71-residue chain is Putative antitoxin VapB15 (71 aa).

It belongs to the UPF0330 family.

In terms of biological role, possibly the antitoxin component of a type II toxin-antitoxin (TA) system. Its cognate toxin is VapC15 (Potential). This Archaeoglobus fulgidus (strain ATCC 49558 / DSM 4304 / JCM 9628 / NBRC 100126 / VC-16) protein is Putative antitoxin VapB15 (vapB15).